The following is a 342-amino-acid chain: D-erythrose-4-phosphate dehydrogenase (342 aa).

11 to 12 (RI) serves as a coordination point for NAD(+). Substrate contacts are provided by residues 153–155 (SCT), arginine 199, 212–213 (TK), and arginine 235. Residue cysteine 154 is the Nucleophile of the active site. Asparagine 317 serves as a coordination point for NAD(+).

This sequence belongs to the glyceraldehyde-3-phosphate dehydrogenase family. Epd subfamily. Homotetramer.

Its subcellular location is the cytoplasm. It catalyses the reaction D-erythrose 4-phosphate + NAD(+) + H2O = 4-phospho-D-erythronate + NADH + 2 H(+). The protein operates within cofactor biosynthesis; pyridoxine 5'-phosphate biosynthesis; pyridoxine 5'-phosphate from D-erythrose 4-phosphate: step 1/5. Functionally, catalyzes the NAD-dependent conversion of D-erythrose 4-phosphate to 4-phosphoerythronate. This chain is D-erythrose-4-phosphate dehydrogenase, found in Shewanella denitrificans (strain OS217 / ATCC BAA-1090 / DSM 15013).